A 275-amino-acid chain; its full sequence is Interleukin-2 receptor subunit alpha (275 aa).

Positions 1–21 (MEPSLLMWRFFVFIVVPGCVT) are cleaved as a signal peptide. Sushi domains lie at 22-81 (EACH…FCNS) and 121-186 (GHCE…KCIS). The Extracellular segment spans residues 22 to 243 (EACHDDPPSL…DTFIFTTEYQ (222 aa)). Cystine bridges form between Cys-24–Cys-64, Cys-49–Cys-77, and Cys-51–Cys-79. N-linked (GlcNAc...) asparagine glycosylation occurs at Asn-80. A disordered region spans residues 86–130 (KNPVKPVTPGSEEQRERKPTDAQSQTQPPEQADLPGHCEEPPPWE). Positions 121–130 (GHCEEPPPWE) are enriched in basic and acidic residues. 2 cysteine pairs are disulfide-bonded: Cys-123–Cys-168 and Cys-152–Cys-184. The tract at residues 188 to 213 (GANSQAPDEAEPPESTEAPPGSGTFL) is disordered. Residues 244–262 (IAVAGCILLLSSILLLSCL) traverse the membrane as a helical segment. The Cytoplasmic portion of the chain corresponds to 263-275 (TWQRRWKKNRRTI).

Non-covalent dimer of an alpha and a beta subunit. IL2R exists in 3 different forms: a high affinity dimer, an intermediate affinity monomer (beta subunit), and a low affinity monomer (alpha subunit). The high and intermediate affinity forms also associate with a gamma subunit.

The protein resides in the membrane. Receptor for interleukin-2. The receptor is involved in the regulation of immune tolerance by controlling regulatory T cells (TREGs) activity. TREGs suppress the activation and expansion of autoreactive T-cells. The protein is Interleukin-2 receptor subunit alpha (IL2RA) of Ovis aries (Sheep).